The chain runs to 180 residues: Bifunctional protein PyrR (180 aa).

Residues 99–111 (VILVDDVLYTCRT) carry the PRPP-binding motif.

Belongs to the purine/pyrimidine phosphoribosyltransferase family. PyrR subfamily. As to quaternary structure, homodimer and homohexamer; in equilibrium.

It carries out the reaction UMP + diphosphate = 5-phospho-alpha-D-ribose 1-diphosphate + uracil. In terms of biological role, regulates transcriptional attenuation of the pyrimidine nucleotide (pyr) operon by binding in a uridine-dependent manner to specific sites on pyr mRNA. This disrupts an antiterminator hairpin in the RNA and favors formation of a downstream transcription terminator, leading to a reduced expression of downstream genes. Also displays a weak uracil phosphoribosyltransferase activity which is not physiologically significant. This is Bifunctional protein PyrR from Clostridium botulinum (strain Alaska E43 / Type E3).